Here is a 269-residue protein sequence, read N- to C-terminus: MFSKKITALALVSAVKAHGTVSGIVADGIYYDGYNPSYQYTSPAPVTVGWLIPKDLDNGFISPAAYTTSDIICHVDAAPAQIEAPVKAGGKVELQWTPWPVSHKGPVIDYLANCNGPCETVDKTKLQWFKIDQVGLISPTAETSGLWGTDVLIANNNSWTVTIPSDIATGNYVLRHEIIALHSASSVNGAQNYPQCVNLAIKGTGTAKPAGVSATSFYTPTDPGIQFSLYGTLTSYTIPGPALYSGAISVTQTLPAAPTASATGVYTVS.

The first 17 residues, 1–17 (MFSKKITALALVSAVKA), serve as a signal peptide directing secretion. Residues His-18 and His-103 each coordinate Cu(2+). Cysteines 73 and 196 form a disulfide. A glycan (N-linked (GlcNAc...) asparagine) is linked at Asn-156. Positions 182 and 191 each coordinate O2. Tyr-193 provides a ligand contact to Cu(2+).

It belongs to the polysaccharide monooxygenase AA9 family. Cu(2+) is required as a cofactor.

It localises to the secreted. It carries out the reaction [(1-&gt;4)-beta-D-glucosyl]n+m + reduced acceptor + O2 = 4-dehydro-beta-D-glucosyl-[(1-&gt;4)-beta-D-glucosyl]n-1 + [(1-&gt;4)-beta-D-glucosyl]m + acceptor + H2O.. In terms of biological role, lytic polysaccharide monooxygenase (LPMO) that depolymerizes crystalline and amorphous polysaccharides via the oxidation of scissile alpha- or beta-(1-4)-glycosidic bonds, yielding C1 and C4 oxidation products. Catalysis by LPMOs requires the reduction of the active-site copper from Cu(II) to Cu(I) by a reducing agent and H(2)O(2) or O(2) as a cosubstrate. This chain is AA9 family lytic polysaccharide monooxygenase I, found in Botryotinia fuckeliana (strain B05.10) (Noble rot fungus).